Consider the following 277-residue polypeptide: Large ribosomal subunit protein uL15c (277 aa).

The transit peptide at 1 to 67 (MATPLSISSN…FARPLVVVSQ (67 aa)) directs the protein to the chloroplast. At threonine 68 the chain carries N-acetylthreonine. The interval 81-125 (FRLDNLGPQPGSRKKQKRKGRGISAGQGASCGFGMRGQKSRSGPG) is disordered. A compositionally biased stretch (basic residues) spans 92-101 (SRKKQKRKGR). Gly residues predominate over residues 103–115 (ISAGQGASCGFGM).

It belongs to the universal ribosomal protein uL15 family. As to quaternary structure, part of the 50S ribosomal subunit.

The protein resides in the plastid. Its subcellular location is the chloroplast. The protein is Large ribosomal subunit protein uL15c (RPL15) of Arabidopsis thaliana (Mouse-ear cress).